A 192-amino-acid polypeptide reads, in one-letter code: Ornithine lipid N-methyltransferase (192 aa).

It belongs to the methyltransferase superfamily.

It carries out the reaction an N(2)-[(3R)-3-(2-saturated-acyloxy)acyl]-L-ornithine lipid + 3 S-adenosyl-L-methionine = an N,N,N-trimethylornithine lipid + 3 S-adenosyl-L-homocysteine + 3 H(+). Functionally, catalyzes the 3-fold methylation of ornithine lipids. Forms ornithine lipids that are mono-, di-, and trimethylated on the delta-nitrogen of the ornithine head group. The chain is Ornithine lipid N-methyltransferase from Singulisphaera acidiphila (strain ATCC BAA-1392 / DSM 18658 / VKM B-2454 / MOB10).